A 342-amino-acid chain; its full sequence is N-acetyl-gamma-glutamyl-phosphate reductase (342 aa).

Residue Cys-147 is part of the active site.

The protein belongs to the NAGSA dehydrogenase family. Type 1 subfamily.

Its subcellular location is the cytoplasm. The enzyme catalyses N-acetyl-L-glutamate 5-semialdehyde + phosphate + NADP(+) = N-acetyl-L-glutamyl 5-phosphate + NADPH + H(+). It functions in the pathway amino-acid biosynthesis; L-arginine biosynthesis; N(2)-acetyl-L-ornithine from L-glutamate: step 3/4. Its function is as follows. Catalyzes the NADPH-dependent reduction of N-acetyl-5-glutamyl phosphate to yield N-acetyl-L-glutamate 5-semialdehyde. The sequence is that of N-acetyl-gamma-glutamyl-phosphate reductase from Methanosphaera stadtmanae (strain ATCC 43021 / DSM 3091 / JCM 11832 / MCB-3).